A 631-amino-acid chain; its full sequence is Polyadenylate-binding protein 3 (631 aa).

RRM domains lie at 11 to 89, 99 to 175, 191 to 268, and 294 to 370; these read ASLY…WSQR, GNIF…QFKS, PNVY…RAQK, and VNLY…LAQR. Phosphotyrosine is present on tyrosine 140. Serine 315 carries the phosphoserine modification. At lysine 361 the chain carries N6,N6-dimethyllysine; alternate. Lysine 361 participates in a covalent cross-link: Glycyl lysine isopeptide (Lys-Gly) (interchain with G-Cter in SUMO2); alternate. Tyrosine 364 is modified (phosphotyrosine). Omega-N-methylarginine is present on residues arginine 426, arginine 430, and arginine 449. A Dimethylated arginine modification is found at arginine 501. Arginine 513 carries the post-translational modification Omega-N-methylarginine. A PABC domain is found at 537-614; that stretch reads QETLTASRLA…AVAVLQAHQA (78 aa).

This sequence belongs to the polyadenylate-binding protein type-1 family. As to expression, testis specific.

Its subcellular location is the cytoplasm. In terms of biological role, binds the poly(A) tail of mRNA. May be involved in cytoplasmic regulatory processes of mRNA metabolism. Binds poly(A) with a slightly lower affinity as compared to PABPC1. The polypeptide is Polyadenylate-binding protein 3 (PABPC3) (Homo sapiens (Human)).